Here is a 201-residue protein sequence, read N- to C-terminus: E3 ubiquitin-protein ligase MIR1 (201 aa).

The RING-CH-type zinc-finger motif lies at 1–58; sequence MDSTGEFCWICHQPEGPLKRFCGCKGSCAVSHQDCLRGWLETSRRQTCALCGTPYSMK. The Cytoplasmic portion of the chain corresponds to 1–81; the sequence is MDSTGEFCWI…EEVLAAMEAC (81 aa). Residues C8, C11, C22, C24, H32, C35, C48, and C51 each contribute to the Zn(2+) site. The segment at 52 to 79 is DIRT; sequence GTPYSMKWKTKPLREWTWGEEEVLAAME. The chain crosses the membrane as a helical span at residues 82 to 102; sequence LPLVLIPLAVLMIVMGTWLLV. Residues 103 to 113 are Extracellular-facing; the sequence is NHNGFLSPRMQ. Residues 114–134 form a helical membrane-spanning segment; the sequence is VVLVVIVLLAMIVFSASASYV. Residues 135 to 201 are Cytoplasmic-facing; the sequence is MVEGPGCLDT…RLGCVRLCCV (67 aa).

Interacts with host UBE2J2.

It localises to the host endoplasmic reticulum membrane. The enzyme catalyses [E2 ubiquitin-conjugating enzyme]-S-ubiquitinyl-L-cysteine + [acceptor protein]-L-cysteine = [E2 ubiquitin-conjugating enzyme]-L-cysteine + [acceptor protein]-S-ubiquitinyl-L-cysteine.. The protein operates within protein modification; protein ubiquitination. E3 ubiquitin-protein ligase that mediates ubiquitination of host surface class I (MHC-I) H-2D(b)/H2-D1 and H-2K(b)/H2-K1 molecules before they exit the endoplasmic reticulum, leading to their degradation by the endoplasmic reticulum-associated degradation (ERAD) system, thus blocking the immune detection of virus-infected cells. Mediates ubiquitination of lysine, as well as serine and threonine residues present in the cytoplasmic tail of surface class I molecules. Promotes ubiquitination of hydroxylated serine or threonine residues via ester bonds instead of the classical isopeptide linkage. This is E3 ubiquitin-protein ligase MIR1 (K3) from Murid herpesvirus 4 (MuHV-4).